The chain runs to 342 residues: Non-homologous end-joining protein 1 (342 aa).

The next 2 helical transmembrane spans lie at 27–47 (LLLFLPMSSPTTIVMIVLVSL) and 129–149 (MFYMILQSLCMLLLKLVNLST). An interaction with LIF1 region spans residues 173-342 (LRDLDGGSKV…RKFGKVRIKN (170 aa)). The disordered stretch occupies residues 270–342 (ADPTNEARPN…RKFGKVRIKN (73 aa)). Over residues 286–296 (PKTDFKPKSRE) the composition is skewed to basic and acidic residues. The segment covering 297–312 (SSTSSQLRLENFSESE) has biased composition (polar residues). Over residues 331 to 342 (KKRKFGKVRIKN) the composition is skewed to basic residues.

It belongs to the XRCC4-XLF family. XLF subfamily. In terms of assembly, interacts (via C-terminus) with LIF1 (via N-terminus); the interaction is direct. Interacts with DNL4.

It is found in the cytoplasm. The protein localises to the nucleus membrane. Functionally, involved in non-homologous end joining (NHEJ). Facilitates the transport of LIF1 into the nucleus, where it can interact with DNA ligase DNL4 to repair double-strand breaks (DSB). Mediates mating-type regulation of NHEJ. Prevents chromosome circularisation by NHEJ in absence of telomerase. The polypeptide is Non-homologous end-joining protein 1 (NEJ1) (Saccharomyces cerevisiae (strain ATCC 204508 / S288c) (Baker's yeast)).